The chain runs to 308 residues: PAK4-inhibitor inka1 (308 aa).

The tract at residues 81-105 (EEEESASDPSAVSSPSSERSLEFDS) is disordered. A compositionally biased stretch (low complexity) spans 87 to 98 (SDPSAVSSPSSE). Inka box regions lie at residues 164-201 (DPED…DLPE) and 281-308 (DTDY…IGYI).

This sequence belongs to the INKA family. Interacts with pak4/pak5.

The protein resides in the nucleus. It is found in the cytoplasm. Functionally, inhibitor of the serine/threonine-protein kinase pak4/pak5. Acts by binding pak4/pak5 in a substrate-like manner, inhibiting the protein kinase activity. Required for the proper migration of neural crest cells during embryonic development, probably by inhibiting pak4/pak5. In Danio rerio (Zebrafish), this protein is PAK4-inhibitor inka1.